The primary structure comprises 1313 residues: Target of rapamycin complex 1 subunit mip1 (1313 aa).

The interval 1 to 35 is disordered; the sequence is MNDRISEVSGSSRARRSVLSYGTTETGSDRYTENS. A phosphoserine mark is found at Ser-834, Ser-837, and Ser-882. WD repeat units lie at residues 986–1029, 1033–1074, 1087–1126, 1130–1170, 1176–1216, 1219–1259, and 1268–1308; these read TFNN…NSFK, SATT…KVEL, GDRN…CYAN, RSSN…RDSL, EHSS…SLQT, TDNS…NTFR, and PKPS…IHTD.

It belongs to the WD repeat RAPTOR family. The target of rapamycin complex 1 (TORC1) is composed of at least mip1, pop3/wat1, tco89, toc1 and tor2.

The protein resides in the cytoplasm. In terms of biological role, component of TORC1, which regulates multiple cellular processes to control cell growth in response to environmental signals. Tor2 is essential for growth. Nutrient limitation and environmental stress signals cause inactivation of TORC1. Active TORC1 positively controls cell growth and ribosome biogenesis by regulating ribosomal protein gene expression. TORC1 negatively controls G1 cell-cycle arrest, sexual development and amino acid uptake. Represses mating, meiosis and sporulation efficiency by interfering with the functions of the transcription factor ste11 and the meiosis-promoting RNA-binding protein mei2. The polypeptide is Target of rapamycin complex 1 subunit mip1 (Schizosaccharomyces pombe (strain 972 / ATCC 24843) (Fission yeast)).